Here is a 107-residue protein sequence, read N- to C-terminus: NADH-quinone oxidoreductase subunit K (107 aa).

3 helical membrane passes run 11-31, 36-56, and 67-87; these read LTHYLVLAALLFVMGMAGVLL, IVLLMSIELMLNSVNLTFVAF, and IMVFFVMTIAAAEAAVGLALA.

Belongs to the complex I subunit 4L family. As to quaternary structure, NDH-1 is composed of 14 different subunits. Subunits NuoA, H, J, K, L, M, N constitute the membrane sector of the complex.

Its subcellular location is the cell inner membrane. The enzyme catalyses a quinone + NADH + 5 H(+)(in) = a quinol + NAD(+) + 4 H(+)(out). Its function is as follows. NDH-1 shuttles electrons from NADH, via FMN and iron-sulfur (Fe-S) centers, to quinones in the respiratory chain. The immediate electron acceptor for the enzyme in this species is believed to be ubiquinone. Couples the redox reaction to proton translocation (for every two electrons transferred, four hydrogen ions are translocated across the cytoplasmic membrane), and thus conserves the redox energy in a proton gradient. In Bdellovibrio bacteriovorus (strain ATCC 15356 / DSM 50701 / NCIMB 9529 / HD100), this protein is NADH-quinone oxidoreductase subunit K.